A 156-amino-acid polypeptide reads, in one-letter code: Endoribonuclease YbeY (156 aa).

Residues H115, H119, and H125 each coordinate Zn(2+).

It belongs to the endoribonuclease YbeY family. Requires Zn(2+) as cofactor.

It is found in the cytoplasm. Single strand-specific metallo-endoribonuclease involved in late-stage 70S ribosome quality control and in maturation of the 3' terminus of the 16S rRNA. This chain is Endoribonuclease YbeY, found in Actinobacillus succinogenes (strain ATCC 55618 / DSM 22257 / CCUG 43843 / 130Z).